The sequence spans 396 residues: Tryptophan synthase beta chain (396 aa).

Lys88 is subject to N6-(pyridoxal phosphate)lysine.

This sequence belongs to the TrpB family. In terms of assembly, tetramer of two alpha and two beta chains. Pyridoxal 5'-phosphate serves as cofactor.

The catalysed reaction is (1S,2R)-1-C-(indol-3-yl)glycerol 3-phosphate + L-serine = D-glyceraldehyde 3-phosphate + L-tryptophan + H2O. It functions in the pathway amino-acid biosynthesis; L-tryptophan biosynthesis; L-tryptophan from chorismate: step 5/5. In terms of biological role, the beta subunit is responsible for the synthesis of L-tryptophan from indole and L-serine. This is Tryptophan synthase beta chain from Shewanella baltica (strain OS155 / ATCC BAA-1091).